Reading from the N-terminus, the 245-residue chain is Probable phosphatase CKO_02035 (245 aa).

Residues His-7, His-9, His-15, His-40, Glu-73, His-101, His-131, Asp-192, and His-194 each coordinate Zn(2+).

Belongs to the PHP family. Homotrimer. Zn(2+) serves as cofactor.

In Citrobacter koseri (strain ATCC BAA-895 / CDC 4225-83 / SGSC4696), this protein is Probable phosphatase CKO_02035.